The following is a 721-amino-acid chain: Catalase-peroxidase 1 (721 aa).

The tryptophyl-tyrosyl-methioninium (Trp-Tyr) (with M-249) cross-link spans W98–Y223. Catalysis depends on H99, which acts as the Proton acceptor. The segment at residues Y223–M249 is a cross-link (tryptophyl-tyrosyl-methioninium (Tyr-Met) (with W-98)). A heme b-binding site is contributed by H264.

Belongs to the peroxidase family. Peroxidase/catalase subfamily. In terms of assembly, homodimer or homotetramer. It depends on heme b as a cofactor. Formation of the three residue Trp-Tyr-Met cross-link is important for the catalase, but not the peroxidase activity of the enzyme.

The catalysed reaction is H2O2 + AH2 = A + 2 H2O. The enzyme catalyses 2 H2O2 = O2 + 2 H2O. Bifunctional enzyme with both catalase and broad-spectrum peroxidase activity. The polypeptide is Catalase-peroxidase 1 (Legionella pneumophila (strain Paris)).